The following is a 271-amino-acid chain: Dermonecrotic toxin SpeSicTox-betaIF1 (271 aa).

The active site involves H3. Mg(2+) contacts are provided by E23 and D25. H39 (nucleophile) is an active-site residue. Cystine bridges form between C43–C49 and C45–C188. A Mg(2+)-binding site is contributed by D83.

The protein belongs to the arthropod phospholipase D family. Class II subfamily. It depends on Mg(2+) as a cofactor. Expressed by the venom gland.

It localises to the secreted. It carries out the reaction an N-(acyl)-sphingosylphosphocholine = an N-(acyl)-sphingosyl-1,3-cyclic phosphate + choline. It catalyses the reaction an N-(acyl)-sphingosylphosphoethanolamine = an N-(acyl)-sphingosyl-1,3-cyclic phosphate + ethanolamine. The enzyme catalyses a 1-acyl-sn-glycero-3-phosphocholine = a 1-acyl-sn-glycero-2,3-cyclic phosphate + choline. The catalysed reaction is a 1-acyl-sn-glycero-3-phosphoethanolamine = a 1-acyl-sn-glycero-2,3-cyclic phosphate + ethanolamine. In terms of biological role, dermonecrotic toxins cleave the phosphodiester linkage between the phosphate and headgroup of certain phospholipids (sphingolipid and lysolipid substrates), forming an alcohol (often choline) and a cyclic phosphate. This toxin acts on sphingomyelin (SM). It may also act on ceramide phosphoethanolamine (CPE), lysophosphatidylcholine (LPC) and lysophosphatidylethanolamine (LPE), but not on lysophosphatidylserine (LPS), and lysophosphatidylglycerol (LPG). It acts by transphosphatidylation, releasing exclusively cyclic phosphate products as second products. Induces dermonecrosis, hemolysis, increased vascular permeability, edema, inflammatory response, and platelet aggregation. In Sicarius peruensis (Six-eyed sand spider), this protein is Dermonecrotic toxin SpeSicTox-betaIF1.